A 326-amino-acid polypeptide reads, in one-letter code: Probable iron chelatin transport system permease protein HP_0889 (326 aa).

10 consecutive transmembrane segments (helical) span residues 7–27, 64–84, 91–111, 113–133, 142–162, 164–184, 187–207, 241–261, 275–295, and 301–321; these read IALA…ESLS, ILAL…QTIF, PFLL…IAVV, SNIA…VLAM, LSLV…AGAI, FFVI…SLSL, YKDC…LFLL, VASA…LVIP, LLLS…VVAK, and DLPV…WLLF.

Belongs to the binding-protein-dependent transport system permease family. FecCD subfamily.

The protein localises to the cell inner membrane. Functionally, part of a binding-protein-dependent transport system for an iron chelatin; probably responsible for the translocation of the substrate across the membrane. The sequence is that of Probable iron chelatin transport system permease protein HP_0889 from Helicobacter pylori (strain ATCC 700392 / 26695) (Campylobacter pylori).